Consider the following 641-residue polypeptide: Frizzled-1 (641 aa).

An N-terminal signal peptide occupies residues 1–68 (MAEEAVPSES…WLLEAPLLLG (68 aa)). Topologically, residues 69–316 (VRAQPAGQVS…PEELRFSRTW (248 aa)) are extracellular. The disordered stretch occupies residues 74–99 (AGQVSGPGQQRPPPPQPQQGGQQYNG). One can recognise an FZ domain in the interval 106 to 224 (PDHGYCQPIS…HGAGELCVGQ (119 aa)). Disulfide bonds link C111–C172, C119–C165, C156–C192, C182–C221, and C186–C209. N125 carries N-linked (GlcNAc...) asparagine glycosylation. N225 is a glycosylation site (N-linked (GlcNAc...) asparagine). Residues 317–337 (IGIWSVLCCASTLFTVLTYLV) traverse the membrane as a helical segment. Topologically, residues 338–348 (DMRRFSYPERP) are cytoplasmic. Residues 349-369 (IIFLSGCYTAVAVAYIAGFLL) form a helical membrane-spanning segment. Residues 370–396 (EDRVVCNDKFAEDGARTVAQGTKKEGC) lie on the Extracellular side of the membrane. A helical transmembrane segment spans residues 397 to 417 (TILFMMLYFFSMASSIWWVIL). Residues 418–439 (SLTWFLAAGMKWGHEAIEANSQ) lie on the Cytoplasmic side of the membrane. Residues 440-460 (YFHLAAWAVPAIKTITILALG) form a helical membrane-spanning segment. Topologically, residues 461–483 (QVDGDVLSGVCFVGLNNVDALRG) are extracellular. Residues 484 to 504 (FVLAPLFVYLFIGTSFLLAGF) traverse the membrane as a helical segment. Residues 505–530 (VSLFRIRTIMKHDGTKTEKLEKLMVR) are Cytoplasmic-facing. Residues 531–551 (IGVFSVLYTVPATIVIACYFY) form a helical membrane-spanning segment. Over 552-595 (EQAFRDQWERSWVAQSCKSYAIPCPHLQGGGGVPPHPPMSPDFT) the chain is Extracellular. Residues 596 to 616 (VFMIKYLMTLIVGITSGFWIW) form a helical membrane-spanning segment. At 617 to 641 (SGKTLNSWRKFYTRLTNSKQGETTV) the chain is on the cytoplasmic side. The short motif at 619-624 (KTLNSW) is the Lys-Thr-X-X-X-Trp motif, mediates interaction with the PDZ domain of Dvl family members element. Positions 639–641 (TTV) match the PDZ-binding motif.

This sequence belongs to the G-protein coupled receptor Fz/Smo family. Interacts with MYOC. Interacts with WNT7B. Post-translationally, ubiquitinated by ZNRF3, leading to its degradation by the proteasome. Widely expressed. Most abundant in kidney, liver, uterus, ovary and heart. Lower levels seen in brain and intestine. Extremely low in calvaria, mammary glands and testis.

Its subcellular location is the cell membrane. Its function is as follows. Receptor for Wnt proteins. Activated by WNT3A, WNT3, WNT1 and to a lesser extent WNT2, but apparently not by WNT4, WNT5A, WNT5B, WNT6 or WNT7A. Contradictory results have been reported for activation by WNT7B. Functions in the canonical Wnt/beta-catenin signaling pathway. The canonical Wnt/beta-catenin signaling pathway leads to the activation of disheveled proteins, inhibition of GSK-3 kinase, nuclear accumulation of beta-catenin and activation of Wnt target genes. A second signaling pathway involving PKC and calcium fluxes has been seen for some family members, but it is not yet clear if it represents a distinct pathway or if it can be integrated in the canonical pathway, as PKC seems to be required for Wnt-mediated inactivation of GSK-3 kinase. Both pathways seem to involve interactions with G-proteins. May be involved in transduction and intercellular transmission of polarity information during tissue morphogenesis and/or in differentiated tissues. The sequence is that of Frizzled-1 (Fzd1) from Rattus norvegicus (Rat).